A 243-amino-acid polypeptide reads, in one-letter code: Putative ABC transporter arginine-binding protein 2 (243 aa).

The first 19 residues, 1 to 19 (MKKVLIAALIAGFSLSATA), serve as a signal peptide directing secretion.

Belongs to the bacterial solute-binding protein 3 family. The complex is composed of two ATP-binding proteins (ArtP), two transmembrane proteins (ArtM and ArtQ) and two solute-binding proteins (ArtJ and ArtI).

It is found in the periplasm. In terms of biological role, part of the ABC transporter complex ArtPIQMJ involved in arginine transport. The chain is Putative ABC transporter arginine-binding protein 2 (artI) from Escherichia coli (strain K12).